Reading from the N-terminus, the 194-residue chain is Probable DNA-directed RNA polymerase subunit delta (194 aa).

The 70-residue stretch at 14–83 folds into the HTH HARE-type domain; it reads LSMIEVARAI…GENKWGLRSW (70 aa). Residues 117-194 form a disordered region; it reads GDEDAIDYSD…SDDEEDEEGE (78 aa).

The protein belongs to the RpoE family. In terms of assembly, RNAP is composed of a core of 2 alpha, a beta and a beta' subunits. The core is associated with a delta subunit and one of several sigma factors.

Functionally, participates in both the initiation and recycling phases of transcription. In the presence of the delta subunit, RNAP displays an increased specificity of transcription, a decreased affinity for nucleic acids, and an increased efficiency of RNA synthesis because of enhanced recycling. The chain is Probable DNA-directed RNA polymerase subunit delta from Streptococcus mutans serotype c (strain ATCC 700610 / UA159).